The chain runs to 261 residues: Kallikrein 1-related peptidase b1 (261 aa).

The N-terminal stretch at Met-1–Ala-18 is a signal peptide. Residues Pro-19–Arg-24 constitute a propeptide, activation peptide. Residues Ile-25–Ala-258 enclose the Peptidase S1 domain. 5 cysteine pairs are disulfide-bonded: Cys-31–Cys-173, Cys-50–Cys-66, Cys-152–Cys-219, Cys-184–Cys-198, and Cys-209–Cys-234. The active-site Charge relay system is the His-65. Asn-102 carries an N-linked (GlcNAc...) asparagine glycan. Catalysis depends on Asp-120, which acts as the Charge relay system. The active-site Charge relay system is Ser-213.

It belongs to the peptidase S1 family. Kallikrein subfamily.

It catalyses the reaction Preferential cleavage of Arg-|-Xaa bonds in small molecule substrates. Highly selective action to release kallidin (lysyl-bradykinin) from kininogen involves hydrolysis of Met-|-Xaa or Leu-|-Xaa.. In terms of biological role, glandular kallikreins cleave Met-Lys and Arg-Ser bonds in kininogen to release Lys-bradykinin. The chain is Kallikrein 1-related peptidase b1 (Klk1b1) from Mus musculus (Mouse).